A 231-amino-acid polypeptide reads, in one-letter code: Tegument protein UL51 homolog (231 aa).

Residue cysteine 12 is the site of S-palmitoyl cysteine; by host attachment.

Belongs to the herpesviridae UL51 family. As to quaternary structure, oligomerizes. Interacts with U75; this interaction mediates U75 incorporation to virions. Post-translationally, phosphorylated. In terms of processing, palmitoylation is necessary for Golgi localization.

It localises to the virion tegument. The protein localises to the host cytoplasm. Its subcellular location is the host Golgi apparatus. Its function is as follows. Plays several roles during the time course of infection, including egress of virus particles from the perinuclear space and secondary envelopment of cytoplasmic capsids that bud into specific trans-Golgi network (TGN)-derived membranes. This Human herpesvirus 6B (strain Z29) (HHV-6 variant B) protein is Tegument protein UL51 homolog (U44).